Here is a 994-residue protein sequence, read N- to C-terminus: Valine--tRNA ligase (994 aa).

The short motif at 43-53 (PNVTGTLHMGH) is the 'HIGH' region element. Residues 329 to 345 (QSGMPSGATSDTTNTPS) are compositionally biased toward polar residues. The segment at 329–355 (QSGMPSGATSDTTNTPSDPEASSAANQ) is disordered. The short motif at 585 to 589 (KMSKS) is the 'KMSKS' region element. Lys588 contributes to the ATP binding site. A disordered region spans residues 692-714 (AHSPAQHQAGQDGQDAPRTPQPR). Residues 696-707 (AQHQAGQDGQDA) show a composition bias toward low complexity. Residues 928–994 (LIDVDAERVR…NGLRERRATL (67 aa)) are a coiled coil.

This sequence belongs to the class-I aminoacyl-tRNA synthetase family. ValS type 1 subfamily. In terms of assembly, monomer.

It localises to the cytoplasm. It carries out the reaction tRNA(Val) + L-valine + ATP = L-valyl-tRNA(Val) + AMP + diphosphate. In terms of biological role, catalyzes the attachment of valine to tRNA(Val). As ValRS can inadvertently accommodate and process structurally similar amino acids such as threonine, to avoid such errors, it has a 'posttransfer' editing activity that hydrolyzes mischarged Thr-tRNA(Val) in a tRNA-dependent manner. In Xylella fastidiosa (strain 9a5c), this protein is Valine--tRNA ligase.